Here is a 219-residue protein sequence, read N- to C-terminus: Occludin/ELL domain-containing protein 1 (219 aa).

Positions 1–110 (MQIHAGPASR…DYELKYPPVT (110 aa)) are disordered. Positions 17-43 (LARLSGPEATCNSRPAARGRQRAAAPR) are enriched in low complexity. The span at 72-93 (VFADELRPREPLHPEKHPRDLG) shows a compositional bias: basic and acidic residues. The OCEL domain occupies 100-210 (PDYELKYPPV…QIRKFDDQQD (111 aa)).

This sequence belongs to the ELL/occludin family.

The protein is Occludin/ELL domain-containing protein 1 (Ocel1) of Mus musculus (Mouse).